A 318-amino-acid polypeptide reads, in one-letter code: Ribose-phosphate pyrophosphokinase (318 aa).

Residues 40–42 (DGE) and 99–100 (RQ) contribute to the ATP site. Positions 134 and 173 each coordinate Mg(2+). Lys-196 is a catalytic residue. D-ribose 5-phosphate is bound by residues Arg-198, Asp-222, and 226–230 (DTAGT).

The protein belongs to the ribose-phosphate pyrophosphokinase family. Class I subfamily. As to quaternary structure, homohexamer. The cofactor is Mg(2+).

The protein resides in the cytoplasm. It carries out the reaction D-ribose 5-phosphate + ATP = 5-phospho-alpha-D-ribose 1-diphosphate + AMP + H(+). Its pathway is metabolic intermediate biosynthesis; 5-phospho-alpha-D-ribose 1-diphosphate biosynthesis; 5-phospho-alpha-D-ribose 1-diphosphate from D-ribose 5-phosphate (route I): step 1/1. Functionally, involved in the biosynthesis of the central metabolite phospho-alpha-D-ribosyl-1-pyrophosphate (PRPP) via the transfer of pyrophosphoryl group from ATP to 1-hydroxyl of ribose-5-phosphate (Rib-5-P). The chain is Ribose-phosphate pyrophosphokinase from Burkholderia pseudomallei (strain K96243).